Reading from the N-terminus, the 244-residue chain is uncharacterized protein (244 aa).

A run of 6 helical transmembrane segments spans residues 5 to 27 (KFAL…LLAV), 37 to 59 (IVMV…SRFL), 87 to 106 (LVFI…FYYG), 116 to 138 (LSLF…FFVA), 159 to 181 (FWIW…VQPS), and 196 to 218 (GVFN…RMVA).

It is found in the cell membrane. This is an uncharacterized protein from Archaeoglobus fulgidus (strain ATCC 49558 / DSM 4304 / JCM 9628 / NBRC 100126 / VC-16).